The primary structure comprises 161 residues: SsrA-binding protein (161 aa).

A disordered region spans residues 140 to 161 (KRESIKERDWKRDKQRLLKDRG).

Belongs to the SmpB family.

The protein localises to the cytoplasm. In terms of biological role, required for rescue of stalled ribosomes mediated by trans-translation. Binds to transfer-messenger RNA (tmRNA), required for stable association of tmRNA with ribosomes. tmRNA and SmpB together mimic tRNA shape, replacing the anticodon stem-loop with SmpB. tmRNA is encoded by the ssrA gene; the 2 termini fold to resemble tRNA(Ala) and it encodes a 'tag peptide', a short internal open reading frame. During trans-translation Ala-aminoacylated tmRNA acts like a tRNA, entering the A-site of stalled ribosomes, displacing the stalled mRNA. The ribosome then switches to translate the ORF on the tmRNA; the nascent peptide is terminated with the 'tag peptide' encoded by the tmRNA and targeted for degradation. The ribosome is freed to recommence translation, which seems to be the essential function of trans-translation. The sequence is that of SsrA-binding protein from Sphingopyxis alaskensis (strain DSM 13593 / LMG 18877 / RB2256) (Sphingomonas alaskensis).